The sequence spans 157 residues: MKESILDVLLYLFEHYFSEDADLVRDRDSLQNGLIQAGFSPAEISKAFDWLDALSEQRPSVARPHVDGPVRIYHGPELDKLDVDCRGFLLFLEQHRILDADQRELVLDRAMALDQDELDLDDLKWVVLMVLFNQPGAEAAYAWMETQMFLDEPESVH.

The protein belongs to the Smg family.

The chain is Protein Smg homolog from Xanthomonas euvesicatoria pv. vesicatoria (strain 85-10) (Xanthomonas campestris pv. vesicatoria).